The sequence spans 393 residues: S-adenosylmethionine synthase 2 (393 aa).

Glutamate 9 provides a ligand contact to Mg(2+). Position 15 (histidine 15) interacts with ATP. Glutamate 43 is a binding site for K(+). L-methionine contacts are provided by glutamate 56 and glutamine 99. Residues 167-169, 235-238, aspartate 246, 252-253, alanine 269, lysine 273, and lysine 277 contribute to the ATP site; these read DGK, SGRF, and RK. Aspartate 246 provides a ligand contact to L-methionine. Position 277 (lysine 277) interacts with L-methionine.

It belongs to the AdoMet synthase family. Homotetramer. It depends on Mn(2+) as a cofactor. Mg(2+) serves as cofactor. Requires Co(2+) as cofactor. The cofactor is K(+). Mostly expressed in flowers, seedpods and roots, and, to a lower extent, in stems and leaves.

The protein localises to the cytoplasm. The enzyme catalyses L-methionine + ATP + H2O = S-adenosyl-L-methionine + phosphate + diphosphate. Its pathway is amino-acid biosynthesis; S-adenosyl-L-methionine biosynthesis; S-adenosyl-L-methionine from L-methionine: step 1/1. Catalyzes the formation of S-adenosylmethionine from methionine and ATP. The reaction comprises two steps that are both catalyzed by the same enzyme: formation of S-adenosylmethionine (AdoMet) and triphosphate, and subsequent hydrolysis of the triphosphate. The protein is S-adenosylmethionine synthase 2 (MSAMS2) of Brassica juncea (Indian mustard).